A 792-amino-acid chain; its full sequence is Probable CoA-transferase Rv1866 (792 aa).

The active-site Nucleophile is the D558.

It belongs to the CoA-transferase III family.

Its function is as follows. Probable CoA-transferase. The chain is Probable CoA-transferase Rv1866 from Mycobacterium tuberculosis (strain ATCC 25618 / H37Rv).